A 617-amino-acid polypeptide reads, in one-letter code: Elongation factor 4 (617 aa).

A tr-type G domain is found at 17 to 203; it reads ERIRNFCIIA…RVCELVPHPV (187 aa). GTP is bound by residues 29-34 and 150-153; these read DHGKST and NKID.

It belongs to the TRAFAC class translation factor GTPase superfamily. Classic translation factor GTPase family. LepA subfamily.

The protein localises to the cell membrane. It carries out the reaction GTP + H2O = GDP + phosphate + H(+). In terms of biological role, required for accurate and efficient protein synthesis under certain stress conditions. May act as a fidelity factor of the translation reaction, by catalyzing a one-codon backward translocation of tRNAs on improperly translocated ribosomes. Back-translocation proceeds from a post-translocation (POST) complex to a pre-translocation (PRE) complex, thus giving elongation factor G a second chance to translocate the tRNAs correctly. Binds to ribosomes in a GTP-dependent manner. The protein is Elongation factor 4 of Corynebacterium urealyticum (strain ATCC 43042 / DSM 7109).